Consider the following 144-residue polypeptide: MKFLEFLGKRPPAAAPGPAPAPASAATASERGHAAEDLALAHLQAAGLQLVARNYRTPGRGGGEIDLVLRERDRTLVFVEVRNRSHGAFGGAGGSIGATKQRRIIFAAQHYLRRLPAPPPCRFDVVLVQEQEPVQWIKAAFEAQ.

Positions 11 to 31 (PPAAAPGPAPAPASAATASER) are disordered.

It belongs to the UPF0102 family.

In Verminephrobacter eiseniae (strain EF01-2), this protein is UPF0102 protein Veis_0630.